We begin with the raw amino-acid sequence, 205 residues long: Guanylate kinase (205 aa).

Positions P18–I196 constitute a Guanylate kinase-like domain. Position 25-32 (A25–T32) interacts with ATP.

This sequence belongs to the guanylate kinase family.

Its subcellular location is the cytoplasm. It catalyses the reaction GMP + ATP = GDP + ADP. Functionally, essential for recycling GMP and indirectly, cGMP. The protein is Guanylate kinase (gmk) of Chlamydia muridarum (strain MoPn / Nigg).